A 500-amino-acid chain; its full sequence is Coiled-coil domain-containing protein 125 (500 aa).

Positions 1 to 105 (MSKVPRSSSE…TDSNSELSDE (105 aa)) are disordered. Acidic residues predominate over residues 10 to 23 (EAEDIWETEDDMTE). A compositionally biased stretch (polar residues) spans 92–101 (RLSSTDSNSE). Coiled coils occupy residues 101-237 (ELSD…LEAL) and 286-314 (STRK…TADA). A Phosphoserine modification is found at serine 492.

As to expression, expressed in many tissues, with highest levels in spleen, thymus and bone marrow.

Its subcellular location is the cytoplasm. In terms of biological role, may be involved in the regulation of cell migration. This is Coiled-coil domain-containing protein 125 (Ccdc125) from Mus musculus (Mouse).